A 119-amino-acid polypeptide reads, in one-letter code: UPF0102 protein PM0647 (119 aa).

This sequence belongs to the UPF0102 family.

The chain is UPF0102 protein PM0647 from Pasteurella multocida (strain Pm70).